Consider the following 150-residue polypeptide: MQIILLEKVANLGVLGDVVKVKDGYARNYLIPQGKAKRATQSNMAQFEALRAELERAHAEKLAEAQAIATKLEGLMVQISRKAGMDGRLFGSVSNIDIVDALETQGFKVERSAVRMPEGPIKQVGDSQVDVALHSDIVVPITVSVLGEQQ.

The protein belongs to the bacterial ribosomal protein bL9 family.

Binds to the 23S rRNA. The polypeptide is Large ribosomal subunit protein bL9 (Aromatoleum aromaticum (strain DSM 19018 / LMG 30748 / EbN1) (Azoarcus sp. (strain EbN1))).